Consider the following 427-residue polypeptide: BRO1 domain-containing protein BROX homolog (427 aa).

Positions 1 to 427 (MSHWFHRNPI…PSNSSGCVIA (427 aa)) constitute a BRO1 domain.

Belongs to the BROX family.

This is BRO1 domain-containing protein BROX homolog from Caenorhabditis elegans.